Consider the following 281-residue polypeptide: 2-dehydro-3-deoxyphosphooctonate aldolase (281 aa).

The protein belongs to the KdsA family.

Its subcellular location is the cytoplasm. The enzyme catalyses D-arabinose 5-phosphate + phosphoenolpyruvate + H2O = 3-deoxy-alpha-D-manno-2-octulosonate-8-phosphate + phosphate. It participates in carbohydrate biosynthesis; 3-deoxy-D-manno-octulosonate biosynthesis; 3-deoxy-D-manno-octulosonate from D-ribulose 5-phosphate: step 2/3. Its pathway is bacterial outer membrane biogenesis; lipopolysaccharide biosynthesis. The polypeptide is 2-dehydro-3-deoxyphosphooctonate aldolase (Psychromonas ingrahamii (strain DSM 17664 / CCUG 51855 / 37)).